The primary structure comprises 266 residues: MKLSLSPPPYADTPVVVLISGLGGSGSYWLPQLAVLEQEYQVVCYDQRGTGNNPDTLAEDYSIAQMAAELHQALVAAGIEHYAVVGHALGALVGMQLALDYPASVTVLISVNGWLRINAHTRRCFQVRERLLYSGGAQAWVEAQPLFLYPADWMAARAPRLEAEDALALAHFQGKNNLLRRLNALKRADFSHHADRIRCPVQIICASDDLLVPSACSSELHAALPDSQKMVMPYGGHACNVTDPETFNALLLNGLASLLHHREAAL.

Belongs to the AB hydrolase superfamily. Hydrolase RutD family.

It catalyses the reaction carbamate + 2 H(+) = NH4(+) + CO2. Involved in pyrimidine catabolism. May facilitate the hydrolysis of carbamate, a reaction that can also occur spontaneously. The sequence is that of Putative carbamate hydrolase RutD from Escherichia coli O26:H11 (strain 11368 / EHEC).